The sequence spans 2191 residues: Genome polyprotein (2191 aa).

Glycine 2 carries the N-myristoyl glycine; by host lipid modification. At 2 to 1501 the chain is on the cytoplasmic side; that stretch reads GAQVSTQKTG…HVSRAFICLQ (1500 aa). The tract at residues 566-582 is amphipathic alpha-helix; the sequence is FYQNDVQNAVERSIVRV. Catalysis depends on for protease 2A activity residues histidine 878 and aspartate 896. Cysteine 913 and cysteine 915 together coordinate Zn(2+). Cysteine 967 serves as the catalytic For protease 2A activity. Zn(2+) contacts are provided by cysteine 973 and histidine 975. Residues 1107–1179 are membrane-binding; it reads NNGWLKKFTE…EQSAPSQSDQ (73 aa). Residues 1107 to 1245 form an oligomerization region; sequence NNGWLKKFTE…SPGVGKSVAT (139 aa). The segment at 1128–1132 is RNA-binding; that stretch reads AIKIQ. The region spanning 1211–1367 is the SF3 helicase domain; that stretch reads EKKMSNYIQF…SMYNQNGKIN (157 aa). Residues cysteine 1375, cysteine 1387, and cysteine 1392 each coordinate Zn(2+). The segment at 1375 to 1392 adopts a C4-type; degenerate zinc-finger fold; the sequence is CDEECCPVNFKKCCPLVC. Residues 1419–1426 form an RNA-binding region; sequence EYNHRHSV. Residues 1430–1435 form an oligomerization region; the sequence is LEALFQ. Residues 1502 to 1517 lie within the membrane without spanning it; that stretch reads ALTTFVSVAGIIYIIY. Residues 1518 to 2191 lie on the Cytoplasmic side of the membrane; it reads KLFAGFQGAY…TLRRKWLDSF (674 aa). Tyrosine 1527 is subject to O-(5'-phospho-RNA)-tyrosine. Residues 1547 to 1725 form the Peptidase C3 domain; that stretch reads GPAFEFAVAM…FSAALLKHYF (179 aa). Active-site for protease 3C activity residues include histidine 1586, glutamate 1617, and cysteine 1693. Residues 1956–2072 enclose the RdRp catalytic domain; it reads GHLIAFDYSG…SYPWPIDASL (117 aa). Aspartate 1962 and aspartate 2058 together coordinate Mg(2+).

It belongs to the picornaviruses polyprotein family. As to quaternary structure, interacts with capsid protein VP1 and capsid protein VP3 to form heterotrimeric protomers. Interacts with capsid protein VP0, and capsid protein VP3 to form heterotrimeric protomers. Five protomers subsequently associate to form pentamers which serve as building blocks for the capsid. Interacts with capsid protein VP2, capsid protein VP3 and capsid protein VP4 following cleavage of capsid protein VP0. Interacts with host CD55 and FCGRT; these interactions promote virus attachment to the host cell and subsequent internalization. In terms of assembly, interacts with capsid protein VP1 and capsid protein VP3 in the mature capsid. Interacts with host CD55 and FCGRT; these interactions promote virus attachment to the host cell and subsequent internalization. As to quaternary structure, interacts with capsid protein VP0 and capsid protein VP1 to form heterotrimeric protomers. Five protomers subsequently associate to form pentamers which serve as building blocks for the capsid. Interacts with capsid protein VP4 in the mature capsid. Interacts with protein 2C; this interaction may be important for virion morphogenesis. Interacts with host FCGRT; this interaction promotes virus attachment to the host cell and subsequent internalization. Interacts with capsid protein VP1 and capsid protein VP3. In terms of assembly, homodimer. As to quaternary structure, homohexamer; forms a hexameric ring structure with 6-fold symmetry characteristic of AAA+ ATPases. Interacts (via N-terminus) with host RTN3 (via reticulon domain); this interaction is important for viral replication. Interacts with capsid protein VP3; this interaction may be important for virion morphogenesis. Interacts with protein 3CD. In terms of assembly, homodimer. Interacts with host GBF1. Interacts (via GOLD domain) with host ACBD3 (via GOLD domain); this interaction allows the formation of a viral protein 3A/ACBD3 heterotetramer with a 2:2 stoichiometry, which will stimulate the recruitment of host PI4KB in order to synthesize PI4P at the viral RNA replication sites. As to quaternary structure, interacts with RNA-directed RNA polymerase. Interacts with protein 3AB and with RNA-directed RNA polymerase. In terms of assembly, interacts with Viral protein genome-linked and with protein 3CD. The cofactor is Mg(2+). In terms of processing, specific enzymatic cleavages in vivo by the viral proteases yield processing intermediates and the mature proteins. Post-translationally, myristoylation is required for the formation of pentamers during virus assembly. Further assembly of 12 pentamers and a molecule of genomic RNA generates the provirion. During virion maturation, immature virions are rendered infectious following cleavage of VP0 into VP4 and VP2. This maturation seems to be an autocatalytic event triggered by the presence of RNA in the capsid and it is followed by a conformational change infectious virion. In terms of processing, myristoylation is required during RNA encapsidation and formation of the mature virus particle. Post-translationally, VPg is uridylylated by the polymerase into VPg-pUpU. This acts as a nucleotide-peptide primer for the genomic RNA replication.

The protein localises to the virion. It is found in the host cytoplasm. The protein resides in the host cytoplasmic vesicle membrane. It localises to the host nucleus. The catalysed reaction is a ribonucleoside 5'-triphosphate + H2O = a ribonucleoside 5'-diphosphate + phosphate + H(+). It carries out the reaction Selective cleavage of Tyr-|-Gly bond in the picornavirus polyprotein.. It catalyses the reaction RNA(n) + a ribonucleoside 5'-triphosphate = RNA(n+1) + diphosphate. The enzyme catalyses Selective cleavage of Gln-|-Gly bond in the poliovirus polyprotein. In other picornavirus reactions Glu may be substituted for Gln, and Ser or Thr for Gly.. With respect to regulation, replication or transcription is subject to high level of random mutations by the nucleotide analog ribavirin. Forms an icosahedral capsid of pseudo T=3 symmetry with capsid proteins VP2 and VP3. The capsid is 300 Angstroms in diameter, composed of 60 copies of each capsid protein and enclosing the viral positive strand RNA genome. Capsid protein VP1 mainly forms the vertices of the capsid. Capsid protein VP1 interacts with host cell receptor to provide virion attachment to target host cells. This attachment induces virion internalization. Tyrosine kinases are probably involved in the entry process. After binding to its receptor, the capsid undergoes conformational changes. Capsid protein VP1 N-terminus (that contains an amphipathic alpha-helix) and capsid protein VP4 are externalized. Together, they shape a pore in the host membrane through which viral genome is translocated to host cell cytoplasm. Functionally, forms an icosahedral capsid of pseudo T=3 symmetry with capsid proteins VP2 and VP3. The capsid is 300 Angstroms in diameter, composed of 60 copies of each capsid protein and enclosing the viral positive strand RNA genome. In terms of biological role, lies on the inner surface of the capsid shell. After binding to the host receptor, the capsid undergoes conformational changes. Capsid protein VP4 is released, Capsid protein VP1 N-terminus is externalized, and together, they shape a pore in the host membrane through which the viral genome is translocated into the host cell cytoplasm. Its function is as follows. Component of immature procapsids, which is cleaved into capsid proteins VP4 and VP2 after maturation. Allows the capsid to remain inactive before the maturation step. Cysteine protease that cleaves viral polyprotein and specific host proteins. It is responsible for the autocatalytic cleavage between the P1 and P2 regions, which is the first cleavage occurring in the polyprotein. Also cleaves the host translation initiation factor EIF4G1, in order to shut down the capped cellular mRNA translation. Inhibits the host nucleus-cytoplasm protein and RNA trafficking by cleaving host members of the nuclear pores. Counteracts stress granule formation probably by antagonizing its assembly or promoting its dissassembly. Functionally, plays an essential role in the virus replication cycle by acting as a viroporin. Creates a pore in the host endoplasmic reticulum and as a consequence releases Ca2+ in the cytoplasm of infected cell. In turn, high levels of cytoplasmic calcium may trigger membrane trafficking and transport of viral ER-associated proteins to viroplasms, sites of viral genome replication. In terms of biological role, induces and associates with structural rearrangements of intracellular membranes. Displays RNA-binding, nucleotide binding and NTPase activities. May play a role in virion morphogenesis and viral RNA encapsidation by interacting with the capsid protein VP3. Its function is as follows. Localizes the viral replication complex to the surface of membranous vesicles. Together with protein 3CD binds the Cis-Active RNA Element (CRE) which is involved in RNA synthesis initiation. Acts as a cofactor to stimulate the activity of 3D polymerase, maybe through a nucleid acid chaperone activity. Localizes the viral replication complex to the surface of membranous vesicles. It inhibits host cell endoplasmic reticulum-to-Golgi apparatus transport and causes the disassembly of the Golgi complex, possibly through GBF1 interaction. This would result in depletion of MHC, trail receptors and IFN receptors at the host cell surface. Plays an essential role in viral RNA replication by recruiting ACBD3 and PI4KB at the viral replication sites, thereby allowing the formation of the rearranged membranous structures where viral replication takes place. Functionally, acts as a primer for viral RNA replication and remains covalently bound to viral genomic RNA. VPg is uridylylated prior to priming replication into VPg-pUpU. The oriI viral genomic sequence may act as a template for this. The VPg-pUpU is then used as primer on the genomic RNA poly(A) by the RNA-dependent RNA polymerase to replicate the viral genome. During genome replication, the VPg-RNA linkage is removed by the host TDP2, thereby accelerating replication. During the late stage of the replication cycle, host TDP2 is excluded from sites of viral RNA synthesis and encapsidation, allowing for the generation of progeny virions. In terms of biological role, involved in the viral replication complex and viral polypeptide maturation. It exhibits protease activity with a specificity and catalytic efficiency that is different from protease 3C. Protein 3CD binds to the 5'UTR of the viral genome. Its function is as follows. Replicates the viral genomic RNA on the surface of intracellular membranes. May form linear arrays of subunits that propagate along a strong head-to-tail interaction called interface-I. Covalently attaches UMP to a tyrosine of VPg, which is used to prime RNA synthesis. The positive stranded RNA genome is first replicated at virus induced membranous vesicles, creating a dsRNA genomic replication form. This dsRNA is then used as template to synthesize positive stranded RNA genomes. ss(+)RNA genomes are either translated, replicated or encapsidated. Major viral protease that mediates proteolytic processing of the polyprotein. Cleaves host EIF5B, contributing to host translation shutoff. Also cleaves host PABPC1, contributing to host translation shutoff. Cleaves host NLRP1, triggers host N-glycine-mediated degradation of the autoinhibitory NLRP1 N-terminal fragment. The protein is Genome polyprotein of Echovirus 6 (strain Charles).